A 260-amino-acid polypeptide reads, in one-letter code: MDKKIVIPGDLLSENQKKAGYGTYVKNDKIYSSLCGIENLKEDKVGVIPLAGAYIPSANDVVIGIVIVVTPSNWIFDIAAPYDGLLHVSEYPRRVESREMPEILNVGDSVILRVKDVDSSMKVELALRDPSLHKLKTGQIIKVESVKVPRVIGHGGSMISMLKKETNCSIFVGQNGRIWIDGKDEDIELLSKALRKIELEAQRSGLTDRIYNFLKNERIRQKESKPVGFFKNETEGVTATKEDHSEEIYRKIDVLLDPKN.

In terms of domain architecture, S1 motif spans 59–128 (NDVVIGIVIV…SSMKVELALR (70 aa)). One can recognise a KH domain in the interval 136-194 (KTGQIIKVESVKVPRVIGHGGSMISMLKKETNCSIFVGQNGRIWIDGKDEDIELLSKAL).

It belongs to the RRP4 family. As to quaternary structure, component of the archaeal exosome complex. Forms a trimer of Rrp4 and/or Csl4 subunits. The trimer associates with a hexameric ring-like arrangement composed of 3 Rrp41-Rrp42 heterodimers.

It is found in the cytoplasm. Non-catalytic component of the exosome, which is a complex involved in RNA degradation. Increases the RNA binding and the efficiency of RNA degradation. Confers strong poly(A) specificity to the exosome. This is Exosome complex component Rrp4 from Methanosarcina acetivorans (strain ATCC 35395 / DSM 2834 / JCM 12185 / C2A).